A 311-amino-acid chain; its full sequence is Dehydrogenase/reductase SDR family member 7C (311 aa).

The first 18 residues, 1–18 (MGVTAVLMLPLLLLGISG), serve as a signal peptide directing secretion. 5 residues coordinate NAD(+): S47, L49, Y191, K195, and S226. Y191 (proton acceptor) is an active-site residue.

This sequence belongs to the short-chain dehydrogenases/reductases (SDR) family.

The protein localises to the sarcoplasmic reticulum membrane. The catalysed reaction is all-trans-retinol + NAD(+) = all-trans-retinal + NADH + H(+). Functionally, NADH-dependent oxidoreductase which catalyzes the oxidation of all-trans-retinol to all-trans-retinal. Plays a role in the regulation of cardiac and skeletal muscle metabolic functions. Maintains Ca(2+) intracellular homeostasis by repressing Ca(2+) release from the sarcoplasmic reticulum (SR) in myotubes, possibly through local alternations in NAD/NADH or retinol/retinal. Also plays a role in Ca(2+) homeostasis by controlling Ca(2+) overload in the cytosol and the SR in myotubes. Involved in glucose uptake into skeletal muscles and muscle performance by activating PI3K and mTORC2-mediated AKT1 phosphorylation signaling pathways, possibly through the action of its downstream catalytic product all-trans-retinoic acid. The sequence is that of Dehydrogenase/reductase SDR family member 7C (DHRS7C) from Bos taurus (Bovine).